Reading from the N-terminus, the 421-residue chain is Adenylosuccinate synthetase (421 aa).

Residues 11 to 17 (GDEGKGK) and 39 to 41 (GHT) contribute to the GTP site. Residue D12 is the Proton acceptor of the active site. Positions 12 and 39 each coordinate Mg(2+). IMP is bound by residues 12 to 15 (DEGK), 37 to 40 (NAGH), T129, R143, N219, T234, and R298. The active-site Proton donor is the H40. 294-300 (VTTGRRR) is a substrate binding site. Residues R300, 326 to 328 (KLD), and 409 to 411 (GTG) contribute to the GTP site.

The protein belongs to the adenylosuccinate synthetase family. In terms of assembly, homodimer. Requires Mg(2+) as cofactor.

The protein localises to the cytoplasm. It catalyses the reaction IMP + L-aspartate + GTP = N(6)-(1,2-dicarboxyethyl)-AMP + GDP + phosphate + 2 H(+). Its pathway is purine metabolism; AMP biosynthesis via de novo pathway; AMP from IMP: step 1/2. In terms of biological role, plays an important role in the de novo pathway and in the salvage pathway of purine nucleotide biosynthesis. Catalyzes the first committed step in the biosynthesis of AMP from IMP. The protein is Adenylosuccinate synthetase of Paracoccidioides brasiliensis (strain Pb03).